The following is a 158-amino-acid chain: Small ribosomal subunit protein uS9 (158 aa).

This sequence belongs to the universal ribosomal protein uS9 family.

The sequence is that of Small ribosomal subunit protein uS9 from Brucella canis (strain ATCC 23365 / NCTC 10854 / RM-666).